Here is a 354-residue protein sequence, read N- to C-terminus: Guanine nucleotide-binding protein alpha-2 subunit (354 aa).

A G-alpha domain is found at 33 to 354 (KIYKVLLLGA…QHSLKEAGMF (322 aa)). Residues 36 to 49 (KVLLLGASDSGKST) are G1 motif. GTP is bound by residues aspartate 44, serine 45, glycine 46, lysine 47, serine 48, threonine 49, aspartate 148, leucine 173, threonine 179, glycine 201, asparagine 269, lysine 270, aspartate 272, and alanine 326. Serine 48 lines the Mg(2+) pocket. Residues 171–179 (DILRSRNST) are G2 motif. Threonine 179 contacts Mg(2+). Residues 194–203 (IRMFDVGGQR) are G3 motif. Residues 265-272 (ILFLNKFD) are G4 motif. A G5 motif region spans residues 324 to 329 (TTAVDT).

Belongs to the G-alpha family. G proteins are composed of 3 units; alpha, beta and gamma. Binding of the beta-gamma subunit complex (git5-git11) to the alpha subunit (gpa2) facilitates interaction with GPCR git3. Interacts with GPCR git3; the interaction is direct and leads to activation of gpa2 upon glucose stimulation. Interacts with adenylate cyclase cyr1 (via N-terminus); the interaction is direct and serves to activate adenylate cyclase and cAMP-PKA signaling, to repress sexual development and gluconeogenesis. Requires Mg(2+) as cofactor.

It localises to the cell membrane. Alpha subunit of the heterotrimeric guanine nucleotide-binding protein (G protein) involved in glucose-induced cAMP signaling. Binds to its cognate transmembrane receptor git3, which senses extracellular glucose, and activates cAMP-PKA signaling to repress sexual development and gluconeogenesis. In Schizosaccharomyces pombe (strain 972 / ATCC 24843) (Fission yeast), this protein is Guanine nucleotide-binding protein alpha-2 subunit.